Reading from the N-terminus, the 192-residue chain is BON1-associated protein 1 (192 aa).

One can recognise a C2 domain in the interval 1–119 (MIYFGRSIDN…RYSPEGHLNF (119 aa)).

Interacts with BON1 (via VWA domain), BON2 and BON3. In terms of tissue distribution, expressed in roots, leaves, stems and flowers.

The protein resides in the membrane. Negative regulator of cell death and defense responses. Exhibits calcium-dependent phospholipid binding properties. The polypeptide is BON1-associated protein 1 (BAP1) (Arabidopsis thaliana (Mouse-ear cress)).